The chain runs to 254 residues: Mamu class II histocompatibility antigen, DR alpha chain (254 aa).

The N-terminal stretch at 1–25 is a signal peptide; the sequence is MAESGVPVLGFFIIAVLMSAQESWA. The interval 26–109 is alpha-1; the sequence is IKEEHVIIQA…KRSNNTPITN (84 aa). At 26–216 the chain is on the extracellular side; it reads IKEEHVIIQA…APSPLPETTE (191 aa). Asn-103 is a glycosylation site (N-linked (GlcNAc...) asparagine). An alpha-2 region spans residues 110–203; sequence VPPEVTVLTN…CLDAPLLKHW (94 aa). Positions 112–204 constitute an Ig-like C1-type domain; that stretch reads PEVTVLTNSP…LDAPLLKHWE (93 aa). A disulfide bridge links Cys-132 with Cys-188. Positions 204 to 216 are connecting peptide; the sequence is EFDAPSPLPETTE. The chain crosses the membrane as a helical span at residues 217–239; the sequence is NVVCALGLIVGLVGIIVGTVFII. Residues 240 to 254 are Cytoplasmic-facing; the sequence is KGVRKSNAAERRGPL. Lys-244 is covalently cross-linked (Glycyl lysine isopeptide (Lys-Gly) (interchain with G-Cter in ubiquitin)).

It belongs to the MHC class II family. As to quaternary structure, heterodimer of an alpha chain and a beta chain.

Its subcellular location is the membrane. In Macaca mulatta (Rhesus macaque), this protein is Mamu class II histocompatibility antigen, DR alpha chain (Mamu-DRA).